Reading from the N-terminus, the 708-residue chain is Metal-pseudopaline receptor CntO (708 aa).

The first 21 residues, 1–21 (MRVSVSLVLGVGLGCSSPALW), serve as a signal peptide directing secretion. Residues 63 to 169 (RIEDIPQAIS…PGGTVNLVTK (107 aa)) enclose the TBDR plug domain. The region spanning 174-708 (ERFARLHASA…NLTMSLTLNY (535 aa)) is the TBDR beta-barrel domain.

This sequence belongs to the TonB-dependent receptor family.

Its subcellular location is the cell outer membrane. Transports the metallophore pseudopaline, which is involved in the acquisition of nickel and zinc, and thus enables bacterial growth inside the host, where metal access is limited. Is probably involved in the import of pseudopaline-metal complexes. This chain is Metal-pseudopaline receptor CntO, found in Pseudomonas aeruginosa (strain UCBPP-PA14).